A 124-amino-acid polypeptide reads, in one-letter code: Large ribosomal subunit protein bL20 (124 aa).

This sequence belongs to the bacterial ribosomal protein bL20 family.

In terms of biological role, binds directly to 23S ribosomal RNA and is necessary for the in vitro assembly process of the 50S ribosomal subunit. It is not involved in the protein synthesizing functions of that subunit. This chain is Large ribosomal subunit protein bL20, found in Ehrlichia chaffeensis (strain ATCC CRL-10679 / Arkansas).